The following is a 99-amino-acid chain: Small integral membrane protein 14 (99 aa).

The Lumenal segment spans residues 1–49 (MAEGGFDPCECICSHEHAMRRLINLLRQSQSYCTDTECLRELPGPSGDS). The chain crosses the membrane as a helical span at residues 50-70 (GISITVILMAWMVIAVLLFLL). Topologically, residues 71 to 99 (RPPNLRGSSLPGKPSSPHSGQDPPAPPVD) are cytoplasmic. The tract at residues 77–99 (GSSLPGKPSSPHSGQDPPAPPVD) is disordered.

The protein localises to the endoplasmic reticulum membrane. The polypeptide is Small integral membrane protein 14 (Smim14) (Rattus norvegicus (Rat)).